The sequence spans 412 residues: MIEEEVLKIIKPTEEDKKGIEKVLEIIRERLNKLDFEVEGSFRKGTWLRQDTDIDVFVFYPKDVGKEYLERNALNDIINRIKDLDYTLAYAEHPYVIVNINNVEVDIVPALRVESGDKAITAVDRTPFHTKYVTSHLDERGKDEVRLLKRFMKGIGVYGAELKVQGFSGYATELLIIYYGNFRKVLEEASKWKHPIKIELTKPMKIFSEPLIIPDPVDPKRNVTAAVSLKNIATFSIAAKYYLKNPSIEFFFPSKKVEEKVKGDVLILRLNLDEKSSEDIVWGQIKRSVNKIERALKQYGFRVIDVQAWGDTNNITIAVQLESKNIGQYYLNIGPQYYSETIEDFIQKNDNIWVGEDGRLYSIKERKEYDAETIAKKNIVLKVKYNIESYWLQNKEDQQIMKFLRKTPTWLK.

ATP contacts are provided by serine 41 and lysine 44. The CTP site is built by serine 41 and lysine 44. Mg(2+) contacts are provided by aspartate 53, aspartate 55, and aspartate 106. Residues histidine 129, lysine 149, and tyrosine 158 each contribute to the ATP site. CTP contacts are provided by histidine 129, lysine 149, and tyrosine 158.

The protein belongs to the tRNA nucleotidyltransferase/poly(A) polymerase family. Archaeal CCA-adding enzyme subfamily. In terms of assembly, homodimer. Mg(2+) serves as cofactor.

It catalyses the reaction a tRNA precursor + 2 CTP + ATP = a tRNA with a 3' CCA end + 3 diphosphate. The catalysed reaction is a tRNA with a 3' CCA end + 2 CTP + ATP = a tRNA with a 3' CCACCA end + 3 diphosphate. Catalyzes the addition and repair of the essential 3'-terminal CCA sequence in tRNAs without using a nucleic acid template. Adds these three nucleotides in the order of C, C, and A to the tRNA nucleotide-73, using CTP and ATP as substrates and producing inorganic pyrophosphate. tRNA 3'-terminal CCA addition is required both for tRNA processing and repair. Also involved in tRNA surveillance by mediating tandem CCA addition to generate a CCACCA at the 3' terminus of unstable tRNAs. While stable tRNAs receive only 3'-terminal CCA, unstable tRNAs are marked with CCACCA and rapidly degraded. This Saccharolobus islandicus (strain Y.N.15.51 / Yellowstone #2) (Sulfolobus islandicus) protein is CCA-adding enzyme.